Reading from the N-terminus, the 257-residue chain is Acetylglutamate kinase (257 aa).

Residues 43-44, R65, and N157 each bind substrate; that span reads GG. Residues 180 to 185 and 208 to 210 contribute to the ATP site; these read DVSGIL and IIT.

Belongs to the acetylglutamate kinase family. ArgB subfamily. Homodimer.

The protein localises to the cytoplasm. It catalyses the reaction N-acetyl-L-glutamate + ATP = N-acetyl-L-glutamyl 5-phosphate + ADP. It functions in the pathway amino-acid biosynthesis; L-arginine biosynthesis; N(2)-acetyl-L-ornithine from L-glutamate: step 2/4. In terms of biological role, catalyzes the ATP-dependent phosphorylation of N-acetyl-L-glutamate. The polypeptide is Acetylglutamate kinase (Escherichia coli O139:H28 (strain E24377A / ETEC)).